The sequence spans 609 residues: Glutamine--fructose-6-phosphate aminotransferase [isomerizing] (609 aa).

The active-site Nucleophile; for GATase activity is C2. The Glutamine amidotransferase type-2 domain occupies C2–D217. SIS domains follow at residues A285 to A425 and W458 to P599. K604 serves as the catalytic For Fru-6P isomerization activity.

In terms of assembly, homodimer.

Its subcellular location is the cytoplasm. It catalyses the reaction D-fructose 6-phosphate + L-glutamine = D-glucosamine 6-phosphate + L-glutamate. Its function is as follows. Catalyzes the first step in hexosamine metabolism, converting fructose-6P into glucosamine-6P using glutamine as a nitrogen source. This Xylella fastidiosa (strain 9a5c) protein is Glutamine--fructose-6-phosphate aminotransferase [isomerizing].